Here is a 201-residue protein sequence, read N- to C-terminus: Holliday junction branch migration complex subunit RuvA (201 aa).

The domain I stretch occupies residues 1 to 64; that stretch reads MFAYIKGVLA…EFSHTLYGFL (64 aa). Residues 65 to 143 are domain II; sequence SYQERDIFEI…AIGHLDTSDH (79 aa). Positions 144–153 are flexible linker; sequence IEPLTQDPKS. Residues 153–201 are domain III; sequence SKSVQDAMLALINLGYNQTTAQKAIKQGMKELPEEIDLAQLITVALKHV.

It belongs to the RuvA family. As to quaternary structure, homotetramer. Forms an RuvA(8)-RuvB(12)-Holliday junction (HJ) complex. HJ DNA is sandwiched between 2 RuvA tetramers; dsDNA enters through RuvA and exits via RuvB. An RuvB hexamer assembles on each DNA strand where it exits the tetramer. Each RuvB hexamer is contacted by two RuvA subunits (via domain III) on 2 adjacent RuvB subunits; this complex drives branch migration. In the full resolvosome a probable DNA-RuvA(4)-RuvB(12)-RuvC(2) complex forms which resolves the HJ.

The protein resides in the cytoplasm. The RuvA-RuvB-RuvC complex processes Holliday junction (HJ) DNA during genetic recombination and DNA repair, while the RuvA-RuvB complex plays an important role in the rescue of blocked DNA replication forks via replication fork reversal (RFR). RuvA specifically binds to HJ cruciform DNA, conferring on it an open structure. The RuvB hexamer acts as an ATP-dependent pump, pulling dsDNA into and through the RuvAB complex. HJ branch migration allows RuvC to scan DNA until it finds its consensus sequence, where it cleaves and resolves the cruciform DNA. This chain is Holliday junction branch migration complex subunit RuvA, found in Protochlamydia amoebophila (strain UWE25).